The following is a 349-amino-acid chain: Microfibril-associated glycoprotein 3 (349 aa).

The N-terminal stretch at 1–21 (MKLHHCLSFLLVVTLVPAALS) is a signal peptide. Topologically, residues 22 to 139 (LEDVAPLGAN…TLRVIFTSGD (118 aa)) are extracellular. N-linked (GlcNAc...) asparagine glycans are attached at residues Asn-31, Asn-36, Asn-63, and Asn-103. An Ig-like C2-type domain is found at 41–130 (PSFELSAGSY…SPARASYSVT (90 aa)). Cys-68 and Cys-117 are disulfide-bonded. A helical transmembrane segment spans residues 140–160 (MSVYYMVVCLIAFTITLILNV). Residues 161–349 (TRLCLMSTHL…EGSIHHRVSI (189 aa)) are Cytoplasmic-facing. The interval 280-349 (NPELGRSNSP…EGSIHHRVSI (70 aa)) is disordered. Positions 311–331 (VHLQSETKSIGTDSQDSSHFS) are enriched in polar residues.

Post-translationally, glycosylated.

The protein localises to the cell membrane. Its function is as follows. Component of the elastin-associated microfibrils. The chain is Microfibril-associated glycoprotein 3 (Mfap3) from Mus musculus (Mouse).